The following is a 315-amino-acid chain: Ribosomal RNA small subunit methyltransferase H (315 aa).

S-adenosyl-L-methionine is bound by residues 35–37 (AGH), Asp55, Phe84, Asp105, and Gln112.

The protein belongs to the methyltransferase superfamily. RsmH family.

Its subcellular location is the cytoplasm. It carries out the reaction cytidine(1402) in 16S rRNA + S-adenosyl-L-methionine = N(4)-methylcytidine(1402) in 16S rRNA + S-adenosyl-L-homocysteine + H(+). Its function is as follows. Specifically methylates the N4 position of cytidine in position 1402 (C1402) of 16S rRNA. This Streptococcus agalactiae serotype Ia (strain ATCC 27591 / A909 / CDC SS700) protein is Ribosomal RNA small subunit methyltransferase H.